The following is a 749-amino-acid chain: Chaperone protein DnaK 1 (749 aa).

Phosphothreonine; by autocatalysis is present on T198. Composition is skewed to basic and acidic residues over residues 643–653, 661–694, and 711–724; these read RWDADPWDRSR, YDDRRSPVSDPYRGERWVEEQTSMSRREPVRDRN, and PTWEEDQPPRRDRS. Positions 643-749 are disordered; the sequence is RWDADPWDRS…GWDDDDDEWF (107 aa). The segment covering 740 to 749 has biased composition (acidic residues); the sequence is GWDDDDDEWF.

The protein belongs to the heat shock protein 70 family.

Functionally, acts as a chaperone. The protein is Chaperone protein DnaK 1 of Synechococcus sp. (strain ATCC 27144 / PCC 6301 / SAUG 1402/1) (Anacystis nidulans).